The primary structure comprises 290 residues: Ribosomal RNA small subunit methyltransferase A (290 aa).

Residues asparagine 27, leucine 29, glycine 54, glutamate 75, aspartate 100, and asparagine 125 each coordinate S-adenosyl-L-methionine.

It belongs to the class I-like SAM-binding methyltransferase superfamily. rRNA adenine N(6)-methyltransferase family. RsmA subfamily.

It localises to the cytoplasm. It catalyses the reaction adenosine(1518)/adenosine(1519) in 16S rRNA + 4 S-adenosyl-L-methionine = N(6)-dimethyladenosine(1518)/N(6)-dimethyladenosine(1519) in 16S rRNA + 4 S-adenosyl-L-homocysteine + 4 H(+). Functionally, specifically dimethylates two adjacent adenosines (A1518 and A1519) in the loop of a conserved hairpin near the 3'-end of 16S rRNA in the 30S particle. May play a critical role in biogenesis of 30S subunits. The sequence is that of Ribosomal RNA small subunit methyltransferase A from Streptococcus gordonii (strain Challis / ATCC 35105 / BCRC 15272 / CH1 / DL1 / V288).